A 235-amino-acid polypeptide reads, in one-letter code: Small ribosomal subunit protein uS3 (235 aa).

The KH type-2 domain maps to 39–107 (VRKFLNKELA…PAQINIAEVK (69 aa)).

The protein belongs to the universal ribosomal protein uS3 family. Part of the 30S ribosomal subunit. Forms a tight complex with proteins S10 and S14.

In terms of biological role, binds the lower part of the 30S subunit head. Binds mRNA in the 70S ribosome, positioning it for translation. This chain is Small ribosomal subunit protein uS3, found in Actinobacillus pleuropneumoniae serotype 5b (strain L20).